A 180-amino-acid chain; its full sequence is Small ribosomal subunit protein uS5 (180 aa).

The interval 1-26 is disordered; that stretch reads MAEEKDKKQSSRRRNNRRTEKESEWQ. Residues 17-26 show a composition bias toward basic and acidic residues; it reads RRTEKESEWQ. The S5 DRBM domain occupies 25-88; it reads WQERVVQIRR…ADGKKHLVNV (64 aa).

Belongs to the universal ribosomal protein uS5 family. Part of the 30S ribosomal subunit. Contacts proteins S4 and S8.

Functionally, with S4 and S12 plays an important role in translational accuracy. Located at the back of the 30S subunit body where it stabilizes the conformation of the head with respect to the body. The polypeptide is Small ribosomal subunit protein uS5 (Synechococcus elongatus (strain ATCC 33912 / PCC 7942 / FACHB-805) (Anacystis nidulans R2)).